The primary structure comprises 246 residues: Sortase B (246 aa).

Residues 5-24 form a helical membrane-spanning segment; that stretch reads SFLGKSLTLVVLGVFLFSGW.

Belongs to the bacterial sortase family. Class B subfamily.

Its subcellular location is the cell membrane. Its function is as follows. Transpeptidase that anchors surface proteins to the cell wall. Recognizes and modifies its substrate by proteolytic cleavage of a C-terminal sorting signal. Following cleavage, a covalent intermediate is formed via a thioester bond between the sortase and its substrate, which is then transferred and covalently attached to the cell wall. Catalyzes a cell wall sorting reaction in which a surface protein with the consensus sorting signal NP(Q/K)(T/S)(N/G/S)(D/A) is cleaved between the fourth and fifth residues, and the fourth position is linked to the cell wall. This is not the major sortase in Listeria, it seems to anchor only 2 proteins, Hbp2 (SvpA) and Hbp1. This Listeria monocytogenes serovar 1/2a (strain ATCC BAA-679 / EGD-e) protein is Sortase B.